The primary structure comprises 171 residues: Large ribosomal subunit protein uL5 (171 aa).

It belongs to the universal ribosomal protein uL5 family. As to quaternary structure, part of the 50S ribosomal subunit; contacts the 5S rRNA and probably tRNA. Forms a bridge to the 30S subunit in the 70S ribosome.

Functionally, this is one of the proteins that bind and probably mediate the attachment of the 5S RNA into the large ribosomal subunit, where it forms part of the central protuberance. In the 70S ribosome it contacts protein S13 of the 30S subunit (bridge B1b), connecting the 2 subunits; this bridge is implicated in subunit movement. May contact the P site tRNA; the 5S rRNA and some of its associated proteins might help stabilize positioning of ribosome-bound tRNAs. The protein is Large ribosomal subunit protein uL5 of Methanocorpusculum labreanum (strain ATCC 43576 / DSM 4855 / Z).